The primary structure comprises 314 residues: Acetaldehyde dehydrogenase (314 aa).

14–17 (SGNI) is an NAD(+) binding site. Cys132 acts as the Acyl-thioester intermediate in catalysis. NAD(+) is bound by residues 163–171 (SAGPGTRAN) and Asn291.

It belongs to the acetaldehyde dehydrogenase family.

The enzyme catalyses acetaldehyde + NAD(+) + CoA = acetyl-CoA + NADH + H(+). This chain is Acetaldehyde dehydrogenase, found in Polaromonas sp. (strain JS666 / ATCC BAA-500).